Here is a 275-residue protein sequence, read N- to C-terminus: Elongation factor Ts (275 aa).

An involved in Mg(2+) ion dislocation from EF-Tu region spans residues 76–79; it reads TDFV.

This sequence belongs to the EF-Ts family.

Its subcellular location is the cytoplasm. Functionally, associates with the EF-Tu.GDP complex and induces the exchange of GDP to GTP. It remains bound to the aminoacyl-tRNA.EF-Tu.GTP complex up to the GTP hydrolysis stage on the ribosome. The chain is Elongation factor Ts from Corynebacterium diphtheriae (strain ATCC 700971 / NCTC 13129 / Biotype gravis).